The chain runs to 856 residues: Translation initiation factor IF-2 (856 aa).

One can recognise a tr-type G domain in the interval 356–526 (PRAPVVTVMG…LLIADLLELK (171 aa)). Positions 365-372 (GHVDHGKT) are G1. 365–372 (GHVDHGKT) lines the GTP pocket. A G2 region spans residues 390-394 (GITQH). Positions 412-415 (DTPG) are G3. Residues 412–416 (DTPGH) and 466–469 (NKID) each bind GTP. Residues 466-469 (NKID) form a G4 region. Residues 502–504 (SAK) form a G5 region.

The protein belongs to the TRAFAC class translation factor GTPase superfamily. Classic translation factor GTPase family. IF-2 subfamily.

It localises to the cytoplasm. Its function is as follows. One of the essential components for the initiation of protein synthesis. Protects formylmethionyl-tRNA from spontaneous hydrolysis and promotes its binding to the 30S ribosomal subunits. Also involved in the hydrolysis of GTP during the formation of the 70S ribosomal complex. The polypeptide is Translation initiation factor IF-2 (Ehrlichia ruminantium (strain Welgevonden)).